The primary structure comprises 239 residues: Octanoyltransferase (239 aa).

Residues Pro59–Lys239 enclose the BPL/LPL catalytic domain. Substrate is bound by residues Arg101 to His108, Ser168 to Gly170, and Gly181 to Ser183. Cys199 acts as the Acyl-thioester intermediate in catalysis.

This sequence belongs to the LipB family.

It localises to the cytoplasm. It carries out the reaction octanoyl-[ACP] + L-lysyl-[protein] = N(6)-octanoyl-L-lysyl-[protein] + holo-[ACP] + H(+). It participates in protein modification; protein lipoylation via endogenous pathway; protein N(6)-(lipoyl)lysine from octanoyl-[acyl-carrier-protein]: step 1/2. In terms of biological role, catalyzes the transfer of endogenously produced octanoic acid from octanoyl-acyl-carrier-protein onto the lipoyl domains of lipoate-dependent enzymes. Lipoyl-ACP can also act as a substrate although octanoyl-ACP is likely to be the physiological substrate. The polypeptide is Octanoyltransferase (Prochlorococcus marinus (strain NATL2A)).